Here is a 62-residue protein sequence, read N- to C-terminus: Sperm protamine P1 (62 aa).

The disordered stretch occupies residues 1-62 (MARYRHSRSR…RYSRRRRRRY (62 aa)).

The protein belongs to the protamine P1 family. As to expression, testis.

The protein resides in the nucleus. The protein localises to the chromosome. Functionally, protamines substitute for histones in the chromatin of sperm during the haploid phase of spermatogenesis. They compact sperm DNA into a highly condensed, stable and inactive complex. The polypeptide is Sperm protamine P1 (PRM1) (Dorcopsulus vanheurni (Lesser forest wallaby)).